The primary structure comprises 230 residues: MATPAQLGLMDAASPVMEEMIYFHDHVMLVLILITCLIFYSMLVLISSKYIYRFLTDGHVIETVWTVIPAIILVVVALPSLKLLYLTDELDNPQLTIKSVGHQWYWSYEYTDYYDIEFDSYMLPLGDLSKGDARLLEVDNRVVLPVDTSVRVLVTAADVIHSWTVPSLGLKMDAVPGRLNQLALQCSRVGTFYGQCSEICGANHSFMPIVIEAVPVEVFEGWCDMMLDEE.

Residues 1-26 are Mitochondrial intermembrane-facing; the sequence is MATPAQLGLMDAASPVMEEMIYFHDH. Residues 27–48 traverse the membrane as a helical segment; sequence VMLVLILITCLIFYSMLVLISS. At 49-62 the chain is on the mitochondrial matrix side; sequence KYIYRFLTDGHVIE. Residues 63 to 82 form a helical membrane-spanning segment; sequence TVWTVIPAIILVVVALPSLK. Topologically, residues 83–230 are mitochondrial intermembrane; sequence LLYLTDELDN…GWCDMMLDEE (148 aa). His161, Cys196, Glu198, Cys200, His204, and Met207 together coordinate Cu cation. Glu198 contacts Mg(2+).

It belongs to the cytochrome c oxidase subunit 2 family. As to quaternary structure, component of the cytochrome c oxidase (complex IV, CIV), a multisubunit enzyme composed of a catalytic core of 3 subunits and several supernumerary subunits. The complex exists as a monomer or a dimer and forms supercomplexes (SCs) in the inner mitochondrial membrane with ubiquinol-cytochrome c oxidoreductase (cytochrome b-c1 complex, complex III, CIII). The cofactor is Cu cation.

Its subcellular location is the mitochondrion inner membrane. It carries out the reaction 4 Fe(II)-[cytochrome c] + O2 + 8 H(+)(in) = 4 Fe(III)-[cytochrome c] + 2 H2O + 4 H(+)(out). Component of the cytochrome c oxidase, the last enzyme in the mitochondrial electron transport chain which drives oxidative phosphorylation. The respiratory chain contains 3 multisubunit complexes succinate dehydrogenase (complex II, CII), ubiquinol-cytochrome c oxidoreductase (cytochrome b-c1 complex, complex III, CIII) and cytochrome c oxidase (complex IV, CIV), that cooperate to transfer electrons derived from NADH and succinate to molecular oxygen, creating an electrochemical gradient over the inner membrane that drives transmembrane transport and the ATP synthase. Cytochrome c oxidase is the component of the respiratory chain that catalyzes the reduction of oxygen to water. Electrons originating from reduced cytochrome c in the intermembrane space (IMS) are transferred via the dinuclear copper A center (CU(A)) of subunit 2 and heme A of subunit 1 to the active site in subunit 1, a binuclear center (BNC) formed by heme A3 and copper B (CU(B)). The BNC reduces molecular oxygen to 2 water molecules using 4 electrons from cytochrome c in the IMS and 4 protons from the mitochondrial matrix. The sequence is that of Cytochrome c oxidase subunit 2 (COII) from Branchiostoma floridae (Florida lancelet).